The chain runs to 270 residues: Orotidine 5'-phosphate decarboxylase (270 aa).

The Proton donor role is filled by Lys-95.

This sequence belongs to the OMP decarboxylase family. Type 2 subfamily.

It carries out the reaction orotidine 5'-phosphate + H(+) = UMP + CO2. It functions in the pathway pyrimidine metabolism; UMP biosynthesis via de novo pathway; UMP from orotate: step 2/2. In Dechloromonas aromatica (strain RCB), this protein is Orotidine 5'-phosphate decarboxylase.